Reading from the N-terminus, the 257-residue chain is Inositol diphosphatase DSP2 (257 aa).

Positions 66–251 constitute a Tyrosine-protein phosphatase domain; it reads NFSMVDNGIF…VSGLKHTPMS (186 aa). Positions 168 and 172 each coordinate 1D-myo-inositol hexakisphosphate. Catalysis depends on Cys192, which acts as the Phosphocysteine intermediate.

It belongs to the protein-tyrosine phosphatase family. Atypical dual-specificity phosphatase Siw14-like subfamily. Expressed in roots, leaves, stems, flowers and siliques.

It carries out the reaction 5-diphospho-1D-myo-inositol 1,2,3,4,6-pentakisphosphate + H2O = 1D-myo-inositol hexakisphosphate + phosphate + H(+). The catalysed reaction is 1,5-bis(diphospho)-1D-myo-inositol 2,3,4,6-tetrakisphosphate + H2O = 1-diphospho-1D-myo-inositol 2,3,4,5,6-pentakisphosphate + phosphate + 2 H(+). It catalyses the reaction 3,5-bis(diphospho)-1D-myo-inositol 1,2,4,6-tetrakisphosphate + H2O = 3-diphospho-1D-myo-inositol 1,2,4,5,6-pentakisphosphate + phosphate + 2 H(+). The enzyme catalyses 6-diphospho-1D-myo-inositol pentakisphosphate + H2O = 1D-myo-inositol hexakisphosphate + phosphate + H(+). In terms of biological role, cleaves the beta-phosphate at the 5-position of soluble inositol pyrophosphates. Has highest activity on 5-diphosphoinositol 1,2,3,4,6-pentakisphosphate (5-InsP(7)), 1,5-bis-diphosphoinositol 2,3,4,6-tetrakisphosphate (1,5-InsP(8)) and 3,5-InsP(8). Possesses phosphotyrosine phosphatase activity in vitro. Dephosphorylates the phosphoinositides PI(3,5)P2. Hydrolyzes para-nitrophenyl phosphate and O-methylfluorescein phosphate in vitro. This is Inositol diphosphatase DSP2 from Arabidopsis thaliana (Mouse-ear cress).